The sequence spans 262 residues: Acyl-[acyl-carrier-protein]--UDP-N-acetylglucosamine O-acyltransferase (262 aa).

It belongs to the transferase hexapeptide repeat family. LpxA subfamily. Homotrimer.

It localises to the cytoplasm. The enzyme catalyses a (3R)-hydroxyacyl-[ACP] + UDP-N-acetyl-alpha-D-glucosamine = a UDP-3-O-[(3R)-3-hydroxyacyl]-N-acetyl-alpha-D-glucosamine + holo-[ACP]. It functions in the pathway glycolipid biosynthesis; lipid IV(A) biosynthesis; lipid IV(A) from (3R)-3-hydroxytetradecanoyl-[acyl-carrier-protein] and UDP-N-acetyl-alpha-D-glucosamine: step 1/6. Involved in the biosynthesis of lipid A, a phosphorylated glycolipid that anchors the lipopolysaccharide to the outer membrane of the cell. The polypeptide is Acyl-[acyl-carrier-protein]--UDP-N-acetylglucosamine O-acyltransferase (Yersinia pseudotuberculosis serotype O:1b (strain IP 31758)).